We begin with the raw amino-acid sequence, 388 residues long: Formate-dependent phosphoribosylglycinamide formyltransferase (388 aa).

Residues 20-21 (EL) and glutamate 80 each bind N(1)-(5-phospho-beta-D-ribosyl)glycinamide. ATP-binding positions include arginine 112, lysine 153, 158–163 (SSGKGQ), 193–196 (EEFV), and glutamate 201. Residues 117-306 (RLASEKLGLR…EFEIHVRSIL (190 aa)) enclose the ATP-grasp domain. 2 residues coordinate Mg(2+): glutamate 265 and glutamate 277. N(1)-(5-phospho-beta-D-ribosyl)glycinamide-binding positions include aspartate 284, lysine 352, and 359–360 (RR).

It belongs to the PurK/PurT family. Homodimer.

The catalysed reaction is N(1)-(5-phospho-beta-D-ribosyl)glycinamide + formate + ATP = N(2)-formyl-N(1)-(5-phospho-beta-D-ribosyl)glycinamide + ADP + phosphate + H(+). It participates in purine metabolism; IMP biosynthesis via de novo pathway; N(2)-formyl-N(1)-(5-phospho-D-ribosyl)glycinamide from N(1)-(5-phospho-D-ribosyl)glycinamide (formate route): step 1/1. In terms of biological role, involved in the de novo purine biosynthesis. Catalyzes the transfer of formate to 5-phospho-ribosyl-glycinamide (GAR), producing 5-phospho-ribosyl-N-formylglycinamide (FGAR). Formate is provided by PurU via hydrolysis of 10-formyl-tetrahydrofolate. The polypeptide is Formate-dependent phosphoribosylglycinamide formyltransferase (Methanococcus vannielii (strain ATCC 35089 / DSM 1224 / JCM 13029 / OCM 148 / SB)).